A 285-amino-acid chain; its full sequence is Pseudouridine-5'-phosphate glycosidase (285 aa).

Glutamate 17 serves as the catalytic Proton donor. Substrate-binding residues include lysine 77 and valine 97. Residue aspartate 126 participates in Mn(2+) binding. Position 128-130 (128-130 (SQD)) interacts with substrate. Lysine 147 (nucleophile) is an active-site residue.

This sequence belongs to the pseudouridine-5'-phosphate glycosidase family. Homotrimer. Mn(2+) is required as a cofactor.

The catalysed reaction is D-ribose 5-phosphate + uracil = psi-UMP + H2O. Catalyzes the reversible cleavage of pseudouridine 5'-phosphate (PsiMP) to ribose 5-phosphate and uracil. Functions biologically in the cleavage direction, as part of a pseudouridine degradation pathway. In Thermotoga maritima (strain ATCC 43589 / DSM 3109 / JCM 10099 / NBRC 100826 / MSB8), this protein is Pseudouridine-5'-phosphate glycosidase.